A 207-amino-acid polypeptide reads, in one-letter code: 3-demethoxyubiquinol 3-hydroxylase (207 aa).

Fe cation contacts are provided by Glu-56, Glu-86, His-89, Glu-138, Glu-170, and His-173.

Belongs to the COQ7 family. Fe cation is required as a cofactor.

It is found in the cell membrane. It carries out the reaction a 5-methoxy-2-methyl-3-(all-trans-polyprenyl)benzene-1,4-diol + AH2 + O2 = a 3-demethylubiquinol + A + H2O. Its pathway is cofactor biosynthesis; ubiquinone biosynthesis. Catalyzes the hydroxylation of 2-nonaprenyl-3-methyl-6-methoxy-1,4-benzoquinol during ubiquinone biosynthesis. In Cupriavidus necator (strain ATCC 17699 / DSM 428 / KCTC 22496 / NCIMB 10442 / H16 / Stanier 337) (Ralstonia eutropha), this protein is 3-demethoxyubiquinol 3-hydroxylase.